The chain runs to 248 residues: MWLGVVTLFPEMFRAVTDFGVTGRAVSNGLLELQTWNPRDFTHDKHRTVDDRPYGGGPGMLMMVQPLRDAIHAAKVAAGDKAKVIYLSPQGRKLTQQGVEELAKSERLILVCGRYEGIDERIIQTEVDEEWSIGDYVLSGGELPAMTLIDSVSRLVPGVLGKQASAEQDSFSDGLLDCPHYTRPESLDGIDVPAVLLSGNHENIRRWRLQQSLGRTLLRRPELFENLALTDEQTKLLAEFVNTAQAGE.

Residues Gly113 and 133–138 (IGDYVL) each bind S-adenosyl-L-methionine.

Belongs to the RNA methyltransferase TrmD family. In terms of assembly, homodimer.

The protein resides in the cytoplasm. It carries out the reaction guanosine(37) in tRNA + S-adenosyl-L-methionine = N(1)-methylguanosine(37) in tRNA + S-adenosyl-L-homocysteine + H(+). Specifically methylates guanosine-37 in various tRNAs. The sequence is that of tRNA (guanine-N(1)-)-methyltransferase from Shewanella loihica (strain ATCC BAA-1088 / PV-4).